The sequence spans 289 residues: Probable ABC transporter permease protein BruAb2_0483 (289 aa).

The next 6 membrane-spanning stretches (helical) occupy residues 9 to 29, 70 to 90, 99 to 119, 144 to 166, 213 to 233, and 258 to 278; these read FLIL…VVHL, VWTV…AIIL, VARV…AIFW, IQWL…LVTV, IAIV…WVMT, and FGEA…FTVI. The ABC transmembrane type-1 domain maps to 65 to 279; the sequence is LWRTAVWTVA…AILLVFTVIY (215 aa).

It belongs to the binding-protein-dependent transport system permease family. The complex is composed of two ATP-binding proteins (BruAb2_0487), two transmembrane proteins (BruAb2_0483) and a solute-binding protein (BruAb2_0484).

The protein resides in the cell inner membrane. Its function is as follows. Probably part of an ABC transporter complex. Probably responsible for the translocation of the substrate across the membrane. The polypeptide is Probable ABC transporter permease protein BruAb2_0483 (Brucella abortus biovar 1 (strain 9-941)).